The primary structure comprises 306 residues: D-alanine--D-alanine ligase (306 aa).

The ATP-grasp domain occupies 100-295; it reads KQIFRRAGLP…FGQLLERLME (196 aa). ATP is bound at residue 127 to 180; that stretch reads RLPYPLFVKSNTGGSSLRLGRARNRAELDDIMGQIFAAGEEVIMEPVLPGREVT. Residues D249, E262, and N264 each contribute to the Mg(2+) site.

The protein belongs to the D-alanine--D-alanine ligase family. Mg(2+) serves as cofactor. Requires Mn(2+) as cofactor.

It is found in the cytoplasm. The enzyme catalyses 2 D-alanine + ATP = D-alanyl-D-alanine + ADP + phosphate + H(+). It participates in cell wall biogenesis; peptidoglycan biosynthesis. Functionally, cell wall formation. In Desulfovibrio desulfuricans (strain ATCC 27774 / DSM 6949 / MB), this protein is D-alanine--D-alanine ligase.